The primary structure comprises 608 residues: Chaperone protein HtpG (608 aa).

Residues 1-332 (MQFQTEVNQL…VEDLPLNVSR (332 aa)) are a; substrate-binding. Residues 333-536 (EILQENQILK…KNKPDFAMQQ (204 aa)) are b. Positions 537 to 608 (LLKQMGQEQN…LTKIINKAFS (72 aa)) are c.

This sequence belongs to the heat shock protein 90 family. As to quaternary structure, homodimer.

It is found in the cytoplasm. Functionally, molecular chaperone. Has ATPase activity. The protein is Chaperone protein HtpG of Campylobacter jejuni (strain RM1221).